Reading from the N-terminus, the 199-residue chain is NAD(P)H dehydrogenase (quinone) (199 aa).

A Flavodoxin-like domain is found at 4–190 (ILVLYYSSWG…EGARFQGKRL (187 aa)). FMN is bound by residues 10–15 (SSWGHM) and 78–80 (TRY). Trp12 lines the NAD(+) pocket. Substrate is bound at residue Trp98. Residues 113-119 (STATQHG) and His134 contribute to the FMN site. The disordered stretch occupies residues 155 to 175 (VRGGAPYGMTTTSDTDGSRMP).

The protein belongs to the WrbA family. Requires FMN as cofactor.

It carries out the reaction a quinone + NADH + H(+) = a quinol + NAD(+). The catalysed reaction is a quinone + NADPH + H(+) = a quinol + NADP(+). In Chelativorans sp. (strain BNC1), this protein is NAD(P)H dehydrogenase (quinone).